Here is a 264-residue protein sequence, read N- to C-terminus: MARDITFLTVFLESCGAVNNDEAGKLLSAWTSTVRIEGPEPTDSNSLYIPLLPPGMLKIKLNFKMNDRLVTEEQELFTKLREIVGSSIRFWEEQLFYQVQDVSTIENHVILSLKCTILTDAQISTFISKPRELHTHAKGYPEIYYLSELSTTVNFFSKEGNYVEISHVIPHFNEYFSSLIVSQLEFEYPMVFSMISRLRLKWQQSSLAPISYALTSNSVLLPIMLNMIAQDKSSTTAYQILCRRRGPPIQNFQIFSIPAVTYNK.

The leucine-zipper stretch occupies residues L200–L221.

It belongs to the TOP6B-like family. Interacts with REC104; seems to form a functional unit with REC104. REC102-REC104 interacts with SKI8-SPO11 and this interaction is required for proper subcellular location of the proteins during the initiation of recombination. Interacts with MEI4, REC114 and SPO11.

It is found in the nucleus. In terms of biological role, required for formation of the SPO11-mediated double-strand breaks (DSBs) that initiate meiotic recombination. May mediate the interaction between SPO11 subunits during meiosis. Also needed for homolog chromosome pairing, synaptonemal complex formation, and for the proper timing of the first meiotic division. Not required for mitosis and mitotic DNA repair mechanisms. In Saccharomyces cerevisiae (strain RM11-1a) (Baker's yeast), this protein is Meiotic recombination protein REC102 (REC102).